Consider the following 562-residue polypeptide: Thermosome subunit alpha (562 aa).

Disordered regions lie at residues 1–23 and 526–551; these read MAQQ…TSGE and GGQV…GMGG. Positions 537-551 are enriched in gly residues; the sequence is GPAGGPGGMGGGMGG.

Belongs to the TCP-1 chaperonin family. As to quaternary structure, forms an oligomeric complex of eight-membered rings.

Its function is as follows. Molecular chaperone; binds unfolded polypeptides in vitro, and has a weak ATPase activity. This Halobacterium salinarum (strain ATCC 700922 / JCM 11081 / NRC-1) (Halobacterium halobium) protein is Thermosome subunit alpha (thsA).